The primary structure comprises 461 residues: Ribulose bisphosphate carboxylase (461 aa).

Asn112 serves as a coordination point for substrate. Lys167 serves as the catalytic Proton acceptor. Lys169 contributes to the substrate binding site. The Mg(2+) site is built by Lys192, Asp194, and Glu195. Position 192 is an N6-carboxylysine (Lys192). His288 (proton acceptor) is an active-site residue. Substrate contacts are provided by Arg289, His322, and Ser369.

This sequence belongs to the RuBisCO large chain family. Type II subfamily. As to quaternary structure, homodimer. The cofactor is Mg(2+).

The catalysed reaction is 2 (2R)-3-phosphoglycerate + 2 H(+) = D-ribulose 1,5-bisphosphate + CO2 + H2O. It carries out the reaction D-ribulose 1,5-bisphosphate + O2 = 2-phosphoglycolate + (2R)-3-phosphoglycerate + 2 H(+). Functionally, ruBisCO catalyzes two reactions: the carboxylation of D-ribulose 1,5-bisphosphate, the primary event in carbon dioxide fixation, as well as the oxidative fragmentation of the pentose substrate. Both reactions occur simultaneously and in competition at the same active site. This chain is Ribulose bisphosphate carboxylase, found in Rhodopseudomonas palustris (strain BisB5).